The primary structure comprises 2439 residues: Mucin-6 (2439 aa).

A signal peptide spans 1–22 (MVQRWLLLSCCGALLSAGLANT). Residues 43-214 (GQCSTWGAGH…KLDDPGEICT (172 aa)) enclose the VWFD 1 domain. 2 cysteine pairs are disulfide-bonded: C45-C176 and C67-C213. N-linked (GlcNAc...) asparagine glycosylation is present at N268. The 56-residue stretch at 302-357 (CPANQVYQECGSACVKTCSNPQHSCSSSCTFGCFCPEGTVLNDLSNNHTCVPVTQC) folds into the TIL domain. Positions 395 to 579 (GHCSLEGGSF…ALERETDPCS (185 aa)) constitute a VWFD 2 domain. Cystine bridges form between C397/C533 and C419/C578. N486 and N659 each carry an N-linked (GlcNAc...) asparagine glycan. A VWFD 3 domain is found at 866 to 1038 (STCTLYGEGH…NSWKESPLCG (173 aa)). 4 disulfide bridges follow: C868/C1002, C890/C1037, C899/C999, and C917/C924. Residues N975 and N1179 are each glycosylated (N-linked (GlcNAc...) asparagine). 8 disordered regions span residues 1202–1455 (PQPP…TSLV), 1471–1626 (ATSA…LVTP), 1642–1834 (SASI…HPHT), 1868–1983 (SIHS…STGP), 2033–2077 (ATSA…THSS), 2090–2196 (SSSW…SASP), 2233–2278 (VSPT…SLTT), and 2323–2348 (LTAH…SPGV). Low complexity predominate over residues 1224 to 1265 (TGTSTTIGLLSSTGPSPSSNHTPASPTQTPLLPATLTSSKPT). A compositionally biased stretch (polar residues) spans 1276–1286 (TAVTPQATSGL). Low complexity predominate over residues 1294–1339 (STATKPTVTQATTRATASTASPATTSTAQSTTRTTMTLPTPATSGT). Polar residues predominate over residues 1340–1351 (SPTLPKSTNQEL). Low complexity-rich tracts occupy residues 1352–1373 (PGTT…TGPT) and 1381–1415 (TRPT…AGSP). Polar residues-rich tracts occupy residues 1416–1455 (VPST…TSLV), 1471–1481 (ATSASNHSAPT), and 1490–1520 (LKAT…STNK). Composition is skewed to low complexity over residues 1521-1567 (TPTS…ATSS) and 1574-1611 (TTHS…PQTT). One copy of the 1; truncated repeat lies at 1561 to 1738 (TNSATSSRPP…TTSGTSQSRS (178 aa)). The approximate repeats stretch occupies residues 1607–1953 (HPQTTLPTHV…STGTRTPVAH (347 aa)). Residues 1659–1686 (LKATGSTHTAPTMTLTTSGTSQALSSLN) are compositionally biased toward polar residues. Positions 1687-1768 (TAKTSTSLHS…PEVTSTSTTS (82 aa)) are enriched in low complexity. The segment covering 1769–1793 (ITPNHTSTGTRTPVAHTTSATSSRL) has biased composition (polar residues). The stretch at 1785-1953 (TTSATSSRLP…STGTRTPVAH (169 aa)) is repeat 2. 2 stretches are compositionally biased toward low complexity: residues 1794-1834 (PTPF…HPHT) and 1891-1917 (TAPP…TSTS). A compositionally biased stretch (polar residues) spans 1918–1962 (LPYHTSSTHHPEVTPTSTTNITPKHTSTGTRTPVAHTTSASSSRL). A compositionally biased stretch (low complexity) spans 1963–1983 (PTPFTTHSPPTGSSPFSSTGP). Residues 2052 to 2070 (LKATGSTHTAPPMTVTTSG) are compositionally biased toward polar residues. A compositionally biased stretch (low complexity) spans 2090 to 2102 (SSSWLPQNSSSRP). Residues 2107-2120 (ITTQLPHLSSATTP) show a composition bias toward polar residues. Over residues 2121 to 2196 (VSTTNQLSSS…PTTASVSASP (76 aa)) the composition is skewed to low complexity. Polar residues predominate over residues 2240–2264 (HLASSTIAFPSTPRTTASTHTAPAF). The segment covering 2265-2278 (SSQSTTSRSTSLTT) has biased composition (low complexity). Residues 2323–2347 (LTAHGSTPASAPVSSLGTPTPTSPG) are compositionally biased toward polar residues. Intrachain disulfides connect C2349/C2396, C2363/C2410, C2372/C2430, and C2376/C2432. The CTCK domain maps to 2349–2438 (CSVREQQEEI…HCVCSSVACG (90 aa)).

In terms of assembly, multimer; disulfide-linked. O-glycosylated. As to expression, expressed in the regenerative zone of gastric antrum, gastric body mucosa and gastric incisura mucosa. Expressed in the deeper mucous glands of gastric antrum. Overexpressed in Helicobacter pylori infected gastric epithelium. Highly expressed in duodenal Brunner's glands, gall bladder, seminal vesicle, pancreatic centroacinar cells and ducts, and periductal glands of the common bile duct.

Its subcellular location is the secreted. May provide a mechanism for modulation of the composition of the protective mucus layer related to acid secretion or the presence of bacteria and noxious agents in the lumen. Plays an important role in the cytoprotection of epithelial surfaces and are used as tumor markers in a variety of cancers. May play a role in epithelial organogenesis. This Homo sapiens (Human) protein is Mucin-6 (MUC6).